The primary structure comprises 155 residues: Small ribosomal subunit protein uS7c (155 aa).

Belongs to the universal ribosomal protein uS7 family. In terms of assembly, part of the 30S ribosomal subunit.

Its subcellular location is the plastid. It localises to the chloroplast. Functionally, one of the primary rRNA binding proteins, it binds directly to 16S rRNA where it nucleates assembly of the head domain of the 30S subunit. This Silene latifolia (White campion) protein is Small ribosomal subunit protein uS7c (rps7).